Here is a 34-residue protein sequence, read N- to C-terminus: Photosystem II reaction center protein Psb30 (34 aa).

A helical membrane pass occupies residues 6 to 26; sequence VIGQLLSATLIVLAGPAVIFV.

Belongs to the Psb30/Ycf12 family. PSII is composed of 1 copy each of membrane proteins PsbA, PsbB, PsbC, PsbD, PsbE, PsbF, PsbH, PsbI, PsbJ, PsbK, PsbL, PsbM, PsbT, PsbX, PsbY, PsbZ, Psb30/Ycf12, peripheral proteins of the oxygen-evolving complex and a large number of cofactors. It forms dimeric complexes.

The protein resides in the plastid. It localises to the chloroplast thylakoid membrane. In terms of biological role, a core subunit of photosystem II (PSII), probably helps stabilize the reaction center. This is Photosystem II reaction center protein Psb30 from Heterosigma akashiwo (strain NIES-293 / 8280G21-1).